The primary structure comprises 379 residues: MSCPYAGNGNDHDDSAVPLTTEVGKIYGEYLMLDKLLDAQCMLSEEDKRPVHDEHLFIITHQAYELWFKQIIFEFDSIRDMLDAEVIDETKTLEIVKRLNRVVLILKLLVDQVPILETMTPLDFMDFRKYLAPASGFQSLQFRLIENKLGVLTEQRVRYNQKYSDVFSDEEARNSIRNSEKDPSLLELVQRWLERTPGLEESGFNFWAKFQESVDRFLEAQVQSAMEEPVEKAKNYRLMDIEKRREVYRSIFDPAVHDALVRRGDRRFSHRALQGAIMITFYRDEPRFSQPHQLLTLLMDIDSLITKWRYNHVIMVQRMIGSQQLGTGGSSGYQYLRSTLSDRYKVFLDLFNLSTFLIPREAIPPLDETIRKKLINKSV.

Substrate is bound by residues 57-61 (FIITH) and Arg-128. His-312 serves as a coordination point for heme. Thr-327 is a binding site for substrate.

This sequence belongs to the tryptophan 2,3-dioxygenase family. As to quaternary structure, homotetramer. Dimer of dimers. Heme is required as a cofactor.

The catalysed reaction is L-tryptophan + O2 = N-formyl-L-kynurenine. Its pathway is amino-acid degradation; L-tryptophan degradation via kynurenine pathway; L-kynurenine from L-tryptophan: step 1/2. It participates in pigment biosynthesis; ommochrome biosynthesis. Functionally, heme-dependent dioxygenase that catalyzes the oxidative cleavage of the L-tryptophan (L-Trp) pyrrole ring and converts L-tryptophan to N-formyl-L-kynurenine. Catalyzes the oxidative cleavage of the indole moiety. Required during larval growth to control the level of potentially harmful free tryptophan in the hemolymph. In the adult the same reaction is the first step in the ommochrome biosynthetic pathway. This chain is Tryptophan 2,3-dioxygenase, found in Drosophila melanogaster (Fruit fly).